The sequence spans 437 residues: Nuclear hormone receptor family member nhr-100 (437 aa).

The segment at residues 21-96 (DTSCLVCGDP…VGMDANAVRS (76 aa)) is a DNA-binding region (nuclear receptor). NR C4-type zinc fingers lie at residues 24–44 (CLVCGDPHGKRHYGAMSCNGC) and 60–79 (CSFNNECIIEFKYRNRCRAC). The NR LBD domain occupies 141–409 (QTKEIIAHML…SGGGLPYDIH (269 aa)).

Belongs to the nuclear hormone receptor family.

The protein localises to the nucleus. Functionally, orphan nuclear receptor. This is Nuclear hormone receptor family member nhr-100 (nhr-100) from Caenorhabditis elegans.